The following is a 374-amino-acid chain: MALKTWKPFITVVSLQFGYAGLSIIAKFALNQGMSPHVLASYRHIVATIFIAPFAYFLDRKIRPKMTLSIFFKILLLGLLEPTIDQNLYYTGMKYTSATFTAAMTNVLPAFAFIMAWIFRLEKVNVKKIHSQAKILGTIVTVGGAMLMTVVKGPLIPLPWANPHDIHQDSSNTGVKQDLTKGASLIAIGCICWAGFINLQAITLKSYPVELSLTAYICFLGSIESTIVALFIERGNPSAWAIHLDSKLLAAVYGGVICSGIGYYVQGVIMKTRGPVFVTAFNPLSMVIVAILGSIILAEVMFLGRILGAIVIVLGLYSVLWGKSKDEPSSSFSDMDKELPLSTPQIVLPSKANAKMDTNDASVVISRPNTNESV.

A run of 10 helical transmembrane segments spans residues 9–29 (FITVVSLQFGYAGLSIIAKFA), 38–58 (VLASYRHIVATIFIAPFAYFL), 64–84 (PKMTLSIFFKILLLGLLEPTI), 99–119 (TFTAAMTNVLPAFAFIMAWIF), 135–155 (ILGTIVTVGGAMLMTVVKGPL), 182–202 (GASLIAIGCICWAGFINLQAI), 212–232 (SLTAYICFLGSIESTIVALFI), 249–269 (LAAVYGGVICSGIGYYVQGVI), 284–304 (LSMVIVAILGSIILAEVMFLG), and 306–326 (ILGAIVIVLGLYSVLWGKSKD). EamA domains lie at 19 to 147 (YAGL…GAML) and 191 to 320 (ICWA…YSVL). Residues 350–374 (SKANAKMDTNDASVVISRPNTNESV) form a disordered region.

This sequence belongs to the drug/metabolite transporter (DMT) superfamily. Plant drug/metabolite exporter (P-DME) (TC 2.A.7.4) family.

It localises to the membrane. In Arabidopsis thaliana (Mouse-ear cress), this protein is WAT1-related protein At2g39510.